We begin with the raw amino-acid sequence, 310 residues long: Putative S-adenosyl-L-methionine-dependent methyltransferase Mb0151 (310 aa).

Residues aspartate 132 and 161 to 162 (DL) each bind S-adenosyl-L-methionine.

This sequence belongs to the UPF0677 family.

Its function is as follows. Exhibits S-adenosyl-L-methionine-dependent methyltransferase activity. In Mycobacterium bovis (strain ATCC BAA-935 / AF2122/97), this protein is Putative S-adenosyl-L-methionine-dependent methyltransferase Mb0151.